A 154-amino-acid chain; its full sequence is MSELPVVTIYTDGACSGNPGPGGWGAILKFGDKEKELNGGERHTTNNQMELMAAISALEALKKPCTVDLYTDSQYVRQGITGWIHGWKRNGWRTADKKPVKNVELWQRLDAALKAHQVRWHWVKGHAGHPENERADQLARDGIVKARLQQRVAE.

Residues 3-144 (ELPVVTIYTD…ADQLARDGIV (142 aa)) enclose the RNase H type-1 domain. Residues Asp12, Glu50, Asp72, and Asp136 each contribute to the Mg(2+) site.

The protein belongs to the RNase H family. Monomer. The cofactor is Mg(2+).

The protein resides in the cytoplasm. The catalysed reaction is Endonucleolytic cleavage to 5'-phosphomonoester.. Functionally, endonuclease that specifically degrades the RNA of RNA-DNA hybrids. This is Ribonuclease H from Bradyrhizobium diazoefficiens (strain JCM 10833 / BCRC 13528 / IAM 13628 / NBRC 14792 / USDA 110).